Reading from the N-terminus, the 118-residue chain is Large ribosomal subunit protein bL20 (118 aa).

It belongs to the bacterial ribosomal protein bL20 family.

Functionally, binds directly to 23S ribosomal RNA and is necessary for the in vitro assembly process of the 50S ribosomal subunit. It is not involved in the protein synthesizing functions of that subunit. The protein is Large ribosomal subunit protein bL20 of Psychrobacter arcticus (strain DSM 17307 / VKM B-2377 / 273-4).